Reading from the N-terminus, the 466-residue chain is 3-isopropylmalate dehydratase large subunit (466 aa).

Residues Cys347, Cys408, and Cys411 each contribute to the [4Fe-4S] cluster site.

This sequence belongs to the aconitase/IPM isomerase family. LeuC type 1 subfamily. As to quaternary structure, heterodimer of LeuC and LeuD. Requires [4Fe-4S] cluster as cofactor.

The catalysed reaction is (2R,3S)-3-isopropylmalate = (2S)-2-isopropylmalate. It participates in amino-acid biosynthesis; L-leucine biosynthesis; L-leucine from 3-methyl-2-oxobutanoate: step 2/4. Functionally, catalyzes the isomerization between 2-isopropylmalate and 3-isopropylmalate, via the formation of 2-isopropylmaleate. The sequence is that of 3-isopropylmalate dehydratase large subunit from Herminiimonas arsenicoxydans.